A 499-amino-acid chain; its full sequence is MEEVFQNETIKQILAKYRRIWAIGHAQSVLGWDLEVNMPKEGILERSVAQGELSVLSHELLLHPEFVNLVEKAKGLENLNEYERGIVRVLDRSIRIARAFPPEFIREVSETTSLATKAWEEAKAKDDFSKFEPWLDKIISLAKRAAEYLGYEEEPYDALLDLYEEGLRTRDVEKMFEVLEKKLKPLLDKILEEGKVPREHPLEKEKYEREWMERVNLWILQKFGFPLGTRARLDVSAHPFTTEFGIRDVRITTRYEGYDFRRTILSTVHEFGHALYELQQDERFMFTPIAGGVSLGIHESQSRFWENIIGRSKEFVELIYPVLKENLPFMSNYTPEDVYLYFNIVRPDFIRTEADVVTYNFHILLRFKLERLMVSEEIKAKDLPEMWNDEMERLLGIRPRKYSEGILQDIHWAHGSIGYFPTYTIGTLLSAQLYYHIKKDIPDFEEKVAKAEFDPIKAWLREKIHRWGSIYPPKELLKKAIGEDMDAEYFVRWVKEKYL.

The Peptidase M32 domain occupies 6–499 (QNETIKQILA…FVRWVKEKYL (494 aa)). The HPF motif lies at 238 to 240 (HPF). The DXRXT signature appears at 248–252 (DVRIT). Position 269 (H269) interacts with Co(2+). The HEXXH signature appears at 269–273 (HEFGH). E270 functions as the Proton donor/acceptor in the catalytic mechanism. Co(2+) is bound by residues H273 and E299. The HES/GQ signature appears at 298 to 301 (HESQ). An I/NRXXA/SD motif is present at residues 350–355 (IRTEAD). Residues 405–412 (GILQDIHW) carry the GXXQDXHW motif.

The protein belongs to the peptidase M32 family. As to quaternary structure, homodimer. Requires Co(2+) as cofactor. Mn(2+) serves as cofactor.

The catalysed reaction is Release of a C-terminal amino acid with broad specificity, except for -Pro.. Its activity is regulated as follows. EDTA and DTT reversibly abolish carboxypeptidase activity. Broad specificity carboxypetidase that releases amino acids sequentially from the C-terminus, including neutral, aromatic, polar and basic residues, but not Pro, Gly, Asp and Glu. This is Thermostable carboxypeptidase 1 from Pyrococcus furiosus (strain ATCC 43587 / DSM 3638 / JCM 8422 / Vc1).